Here is an 86-residue protein sequence, read N- to C-terminus: Chymotrypsin inhibitor (86 aa).

An N-terminal signal peptide occupies residues 1-22 (MKLLFAIVALLALAFLCADISA).

The protein belongs to the protease inhibitor I13 (potato type I serine protease inhibitor) family. Monomer. Expressed in the body wall, coelomocytes and at a lower level in intestine.

It localises to the secreted. Inhibits L.terrestris digestive chymotrypsin LT_CH 1 and bovine alpha-chymotrypsin. The protein is Chymotrypsin inhibitor of Lumbricus terrestris (Common earthworm).